The chain runs to 91 residues: UPF0250 protein BB0170 (91 aa).

The protein belongs to the UPF0250 family.

This Bordetella bronchiseptica (strain ATCC BAA-588 / NCTC 13252 / RB50) (Alcaligenes bronchisepticus) protein is UPF0250 protein BB0170.